The following is a 1126-amino-acid chain: [F-actin]-monooxygenase mical2 (1126 aa).

Positions 2–494 (GENGDDKHGR…KHLFITNELQ (493 aa)) are monooxygenase domain. Residues Cys97, 116–118 (EKR), 123–125 (RNN), Phe183, Tyr299, and Asp399 each bind FAD. Positions 516–619 (DVRPNKLLIW…MVLYLSKFYE (104 aa)) constitute a Calponin-homology (CH) domain. The Nuclear localization signal motif lies at 659–680 (RKRVPKDEKTSDDSDLNKRRKT). Disordered regions lie at residues 748-830 (AVTA…SLSS) and 892-935 (PSLG…SGMS). Over residues 792–803 (VRPPVQPRPGPA) the composition is skewed to pro residues. Basic and acidic residues predominate over residues 805 to 824 (PTRELRVVERAQSHPDDLGR). The span at 918–932 (SSSDSSPSSAPSRKS) shows a compositional bias: low complexity. The LIM zinc-binding domain maps to 1001 to 1063 (DTCYFCKRRV…QPHFMHSVTK (63 aa)). 8 residues coordinate Zn(2+): Cys1003, Cys1006, His1024, Cys1027, Cys1030, Cys1033, Cys1053, and His1056.

This sequence belongs to the Mical family. Requires FAD as cofactor.

The protein localises to the nucleus. It is found in the cytoplasm. It carries out the reaction L-methionyl-[F-actin] + NADPH + O2 + H(+) = L-methionyl-(R)-S-oxide-[F-actin] + NADP(+) + H2O. Nuclear monooxygenase that promotes depolymerization of F-actin by mediating oxidation of specific methionine residues on actin and regulates the srf signaling. Acts by modifying nuclear actin subunits through the addition of oxygen to form methionine-sulfoxide, leading to promote actin filament severing and prevent repolymerization. Acts as a key regulator of the srf signaling pathway elicited by nerve growth factor and serum: mediates oxidation and subsequent depolymerization of nuclear actin, leading to increase mkl1/mrtf-a presence in the nucleus and promote srf:mkl1/mrtf-a-dependent gene transcription. The sequence is that of [F-actin]-monooxygenase mical2 from Xenopus tropicalis (Western clawed frog).